Consider the following 376-residue polypeptide: Phosphate-binding protein (376 aa).

2 disulfides stabilise this stretch: cysteine 113–cysteine 158 and cysteine 306–cysteine 369.

As to quaternary structure, heterooligomer with human PON1. As to expression, found in human plasma.

It localises to the secreted. In terms of biological role, phosphate-binding protein. The sequence is that of Phosphate-binding protein from Unknown prokaryotic organism.